A 295-amino-acid polypeptide reads, in one-letter code: ATP synthase gamma chain (295 aa).

It belongs to the ATPase gamma chain family. F-type ATPases have 2 components, CF(1) - the catalytic core - and CF(0) - the membrane proton channel. CF(1) has five subunits: alpha(3), beta(3), gamma(1), delta(1), epsilon(1). CF(0) has three main subunits: a, b and c.

The protein localises to the cell inner membrane. Its function is as follows. Produces ATP from ADP in the presence of a proton gradient across the membrane. The gamma chain is believed to be important in regulating ATPase activity and the flow of protons through the CF(0) complex. The chain is ATP synthase gamma chain from Chlorobium phaeobacteroides (strain BS1).